A 158-amino-acid polypeptide reads, in one-letter code: MPAGMSDAAGKTLADFKAPYPEPTSQQRRYVIFLDPKGDSKELNDYKVELIPGRVEKVDGTNVYRMGGNIEERTIDGWGYPYYIVTLTTMSGTLMMPLGDAALKRPRFVAMNTKNLYRYNSRLPIVVYMPKDGELRYRIWTVKSTGSGTAKSTKAREM.

Belongs to the protease inhibitor I11 (ecotin) family.

In Leishmania major, this protein is Ecotin-like protein 2.